The primary structure comprises 635 residues: Frizzled and smoothened-like protein C (635 aa).

The first 20 residues, 1-20, serve as a signal peptide directing secretion; it reads MKFKLIIFIIIIYIIKILKS. Over 21 to 244 the chain is Extracellular; the sequence is EILNEFGYGL…NKWVQMYKMS (224 aa). The FZ domain occupies 32–166; it reads DENLKCLSFI…LTKYGYTENN (135 aa). 2 cysteine pairs are disulfide-bonded: Cys37-Cys108 and Cys50-Cys101. 5 N-linked (GlcNAc...) asparagine glycosylation sites follow: Asn65, Asn141, Asn156, Asn185, and Asn203. A helical membrane pass occupies residues 245 to 265; the sequence is IVLSTLSFICSIYNIITFGLL. At 266–275 the chain is on the cytoplasmic side; it reads SKLKSKYNLC. A helical transmembrane segment spans residues 276-296; the sequence is ITFFSVSTVLMSLMDIVTYGI. Topologically, residues 297-314 are extracellular; it reads GYEELLCPESGRYAIQSD. The helical transmembrane segment at 315 to 335 threads the bilayer; that stretch reads VACGVTGAFFHIGITTGVLWW. Residues 336–356 are Cytoplasmic-facing; it reads TTMSICLYSEVKRFKMISFRY. A helical transmembrane segment spans residues 357-377; it reads IIIFNSVISLILLIIPLSGQA. At 378–398 the chain is on the extracellular side; it reads FMSGNGSLGCWIRKTWYANGT. Asn382 and Asn396 each carry an N-linked (GlcNAc...) asparagine glycan. The chain crosses the membrane as a helical span at residues 399–419; it reads FWIPCGISLFIGAICIVLVIY. Topologically, residues 420-440 are cytoplasmic; sequence EIFKISRNLSKDNKPLMFQIR. The chain crosses the membrane as a helical span at residues 441-461; it reads PFLCVLLVGGSFLYLFIFYFN. Topologically, residues 462 to 496 are extracellular; it reads NERNLDKYKAAIPSYVQCLLSSDENGEDCLTDGPG. The chain crosses the membrane as a helical span at residues 497–517; it reads FGAYFTFYFFTRLFGITSFSI. Residues 518–635 are Cytoplasmic-facing; sequence YGTSKIARDI…SSKDSNTNSF (118 aa). The segment covering 559–594 has biased composition (polar residues); sequence SISGSNQKRFNRNGSNFNMKQNKSNPNDSISLSVVE. Residues 559-635 form a disordered region; that stretch reads SISGSNQKRF…SSKDSNTNSF (77 aa). Positions 594–623 form a coiled coil; that stretch reads ESTKKQDTENELESNIETKENRSTDISIEN. Positions 623–635 are enriched in low complexity; sequence NTTSSKDSNTNSF.

It belongs to the G-protein coupled receptor Fz/Smo family.

The protein resides in the membrane. In Dictyostelium discoideum (Social amoeba), this protein is Frizzled and smoothened-like protein C (fslC).